Reading from the N-terminus, the 460-residue chain is Diguanylate cyclase DosC (460 aa).

Position 98 (H98) interacts with heme. In terms of domain architecture, GGDEF spans 325–458 (TPLSVLIIDV…GRNRVELWKA (134 aa)). Residue D333 coordinates Mg(2+). 2 residues coordinate substrate: N341 and D350. D376 contributes to the Mg(2+) binding site. D376 acts as the Proton acceptor in catalysis.

Heme is required as a cofactor. Requires Mg(2+) as cofactor.

It carries out the reaction 2 GTP = 3',3'-c-di-GMP + 2 diphosphate. The protein operates within purine metabolism; 3',5'-cyclic di-GMP biosynthesis. Functionally, globin-coupled heme-based oxygen sensor protein displaying diguanylate cyclase (DGC) activity in response to oxygen availability. Thus, catalyzes the synthesis of cyclic diguanylate (c-di-GMP) via the condensation of 2 GTP molecules. Cyclic-di-GMP is a second messenger which controls cell surface-associated traits in bacteria. The polypeptide is Diguanylate cyclase DosC (dosC) (Shigella boydii serotype 4 (strain Sb227)).